The following is a 216-amino-acid chain: ATP synthase subunit 5, mitochondrial (216 aa).

Belongs to the ATPase delta chain family. As to quaternary structure, F-type ATPases have 2 components, CF(1) - the catalytic core - and CF(0) - the membrane proton channel. CF(1) has five subunits: alpha(3), beta(3), gamma(1), delta(1), epsilon(1). CF(0) has three main subunits: a, b and c.

The protein localises to the mitochondrion. It is found in the mitochondrion inner membrane. Mitochondrial membrane ATP synthase (F(1)F(0) ATP synthase or Complex V) produces ATP from ADP in the presence of a proton gradient across the membrane which is generated by electron transport complexes of the respiratory chain. F-type ATPases consist of two structural domains, F(1) - containing the extramembraneous catalytic core and F(0) - containing the membrane proton channel, linked together by a central stalk and a peripheral stalk. During catalysis, ATP synthesis in the catalytic domain of F(1) is coupled via a rotary mechanism of the central stalk subunits to proton translocation. Part of the complex F(0) domain and the peripheric stalk, which acts as a stator to hold the catalytic alpha(3)beta(3) subcomplex and subunit a/ATP6 static relative to the rotary elements. The sequence is that of ATP synthase subunit 5, mitochondrial (atp5) from Schizosaccharomyces pombe (strain 972 / ATCC 24843) (Fission yeast).